Reading from the N-terminus, the 690-residue chain is Protein-glutamine gamma-glutamyltransferase 2 (690 aa).

N-acetylalanine is present on alanine 2. Disulfide bonds link cysteine 230–cysteine 370 and cysteine 370–cysteine 371. Active-site residues include cysteine 277, histidine 335, and aspartate 358. Asparagine 398, aspartate 400, glutamate 436, glutamate 446, and glutamate 451 together coordinate Ca(2+). Lysine 467 bears the N6-acetyllysine mark. 479–486 provides a ligand contact to GTP; it reads RIRVGQNM. Glutamate 542 is a binding site for Ca(2+). 583 to 586 is a binding site for GTP; that stretch reads RDIY. Glutamine 636 is covalently cross-linked (Isoglutamyl lysine isopeptide (Gln-Lys) (interchain with K-?)).

Belongs to the transglutaminase superfamily. Transglutaminase family. In terms of assembly, monomer. Interacts with phospholipase C; promoting alpha-1 adrenergic receptor signaling. Interacts with PLCD1. The cofactor is Ca(2+). In terms of processing, disulfide bond formation inactivates the calcium-dependent acyltransferase activity. Cys-370 can form disulfide bonds with both Cys-230 and Cys-371: formation of a disulfide bond between Cys-230 and Cys-370 facilitates formation of the disulfide between Cys-370 and Cys-371, which promotes inactivation of the acyltransferase activity. May also form interchain disulfids between Cys-230 and Cys-370. Ca(2+) protects against disulfide bond formation and inactivation. Auto-transglutaminated: Forms covalent cross-links mediated by transglutaminase between Gln-636 and the epsilon-amino group of a lysine residue of itself or HMGB1, forming homopolymers and heteropolymers, respectively. Post-translationally, S-nitrosylated, leading to inactivation of the acyltransferase activity.

The protein localises to the cytoplasm. It localises to the cytosol. It is found in the nucleus. Its subcellular location is the chromosome. The protein resides in the secreted. The protein localises to the extracellular space. It localises to the extracellular matrix. It is found in the cell membrane. Its subcellular location is the mitochondrion. It catalyses the reaction L-glutaminyl-[protein] + L-lysyl-[protein] = [protein]-L-lysyl-N(6)-5-L-glutamyl-[protein] + NH4(+). It carries out the reaction L-glutaminyl-[protein] + serotonin = 5-serotonyl-L-glutamyl-[protein] + NH4(+). The enzyme catalyses L-glutaminyl-[protein] + dopamine = 5-dopaminyl-L-glutamyl-[protein] + NH4(+). The catalysed reaction is L-glutaminyl-[protein] + histamine = 5-histaminyl-L-glutamyl-[protein] + NH4(+). It catalyses the reaction L-glutaminyl-[protein] + (R)-noradrenaline = 5-(R)-noradrenalinyl-L-glutamyl-[protein] + NH4(+). It carries out the reaction L-glutaminyl-[protein] + H2O = L-glutamyl-[protein] + NH4(+). With respect to regulation, acyltransferase activity is regulated by the binding of GTP and Ca(2+): inactivated by GTP, which stabilizes its closed structure, thereby obstructing the accessibility of substrates to the active sites. In contrast, Ca(2+) acts as a cofactor by inducing conformational change to the active open form. In absence of Ca(2+), Mg(2+) may bind Ca(2+)-binding sites, promoting GTP-binding and subsequent inhibition of the acyltransferase activity. Extracellularly reduced and activated by CLIC3. In terms of biological role, calcium-dependent acyltransferase that catalyzes the formation of covalent bonds between peptide-bound glutamine and various primary amines, such as gamma-amino group of peptide-bound lysine, or mono- and polyamines, thereby producing cross-linked or aminated proteins, respectively. Involved in many biological processes, such as bone development, angiogenesis, wound healing, cellular differentiation, chromatin modification and apoptosis. Acts as a protein-glutamine gamma-glutamyltransferase by mediating the cross-linking of proteins, such as ACO2, HSPB6, FN1, HMGB1, RAP1GDS1, SLC25A4/ANT1, SPP1 and WDR54. Under physiological conditions, the protein cross-linking activity is inhibited by GTP; inhibition is relieved by Ca(2+) in response to various stresses. When secreted, catalyzes cross-linking of proteins of the extracellular matrix, such as FN1 and SPP1 resulting in the formation of scaffolds. Plays a key role during apoptosis, both by (1) promoting the cross-linking of cytoskeletal proteins resulting in condensation of the cytoplasm, and by (2) mediating cross-linking proteins of the extracellular matrix, resulting in the irreversible formation of scaffolds that stabilize the integrity of the dying cells before their clearance by phagocytosis, thereby preventing the leakage of harmful intracellular components. In addition to protein cross-linking, can use different monoamine substrates to catalyze a vast array of protein post-translational modifications: mediates aminylation of serotonin, dopamine, noradrenaline or histamine into glutamine residues of target proteins to generate protein serotonylation, dopaminylation, noradrenalinylation or histaminylation, respectively. Mediates protein serotonylation of small GTPases during activation and aggregation of platelets, leading to constitutive activation of these GTPases. Plays a key role in chromatin organization by mediating serotonylation and dopaminylation of histone H3. Catalyzes serotonylation of 'Gln-5' of histone H3 (H3Q5ser) during serotonergic neuron differentiation, thereby facilitating transcription. Acts as a mediator of neurotransmission-independent role of nuclear dopamine in ventral tegmental area (VTA) neurons: catalyzes dopaminylation of 'Gln-5' of histone H3 (H3Q5dop), thereby regulating relapse-related transcriptional plasticity in the reward system. Regulates vein remodeling by mediating serotonylation and subsequent inactivation of ATP2A2/SERCA2. Also acts as a protein deamidase by mediating the side chain deamidation of specific glutamine residues of proteins to glutamate. Catalyzes specific deamidation of protein gliadin, a component of wheat gluten in the diet. May also act as an isopeptidase cleaving the previously formed cross-links. Also able to participate in signaling pathways independently of its acyltransferase activity: acts as a signal transducer in alpha-1 adrenergic receptor-mediated stimulation of phospholipase C-delta (PLCD) activity and is required for coupling alpha-1 adrenergic agonists to the stimulation of phosphoinositide lipid metabolism. This is Protein-glutamine gamma-glutamyltransferase 2 from Cavia cutleri (Guinea pig).